We begin with the raw amino-acid sequence, 460 residues long: DNA repair protein RAD57 (460 aa).

Gly-125 to Ser-132 contributes to the ATP binding site.

Belongs to the RecA family.

It is found in the nucleus. Functionally, participates in the repair of X-ray-induced damage to DNA and in meiosis. It may act in part by stabilizing a repair complex of other RAD genes. In Saccharomyces cerevisiae (strain ATCC 204508 / S288c) (Baker's yeast), this protein is DNA repair protein RAD57 (RAD57).